A 102-amino-acid polypeptide reads, in one-letter code: NADH-quinone oxidoreductase subunit K 1 (102 aa).

Helical transmembrane passes span 3–23 (TLTT…LGIL), 29–49 (VGML…FMAF), and 62–82 (IIAL…LSII).

The protein belongs to the complex I subunit 4L family. As to quaternary structure, NDH-1 is composed of 14 different subunits. Subunits NuoA, H, J, K, L, M, N constitute the membrane sector of the complex.

The protein localises to the cell inner membrane. It catalyses the reaction a quinone + NADH + 5 H(+)(in) = a quinol + NAD(+) + 4 H(+)(out). Functionally, NDH-1 shuttles electrons from NADH, via FMN and iron-sulfur (Fe-S) centers, to quinones in the respiratory chain. The immediate electron acceptor for the enzyme in this species is believed to be ubiquinone. Couples the redox reaction to proton translocation (for every two electrons transferred, four hydrogen ions are translocated across the cytoplasmic membrane), and thus conserves the redox energy in a proton gradient. The sequence is that of NADH-quinone oxidoreductase subunit K 1 from Syntrophobacter fumaroxidans (strain DSM 10017 / MPOB).